We begin with the raw amino-acid sequence, 134 residues long: Phosphoribosyl-AMP cyclohydrolase (134 aa).

D77 is a binding site for Mg(2+). Residue C78 participates in Zn(2+) binding. Residues D79 and D81 each coordinate Mg(2+). Residues C95 and C102 each contribute to the Zn(2+) site.

Belongs to the PRA-CH family. In terms of assembly, homodimer. Mg(2+) is required as a cofactor. Zn(2+) serves as cofactor.

The protein resides in the cytoplasm. It carries out the reaction 1-(5-phospho-beta-D-ribosyl)-5'-AMP + H2O = 1-(5-phospho-beta-D-ribosyl)-5-[(5-phospho-beta-D-ribosylamino)methylideneamino]imidazole-4-carboxamide. It participates in amino-acid biosynthesis; L-histidine biosynthesis; L-histidine from 5-phospho-alpha-D-ribose 1-diphosphate: step 3/9. In terms of biological role, catalyzes the hydrolysis of the adenine ring of phosphoribosyl-AMP. This chain is Phosphoribosyl-AMP cyclohydrolase, found in Pseudomonas aeruginosa (strain LESB58).